The primary structure comprises 661 residues: MSLNLAALAQAANEARGLGMDAVEKAASGHLGLPLGCAELGATLFGHAFRYNPDKPEWLNRDIFVLSAGHGSMFLYAWLHLSGYKVSLDDIKQFRQLSSTTPGHPEFRDTPGVEATTGPLGQGVGNGLGYAVACKMAQAHFNTKDHKIFDQKVVVLAGDGCLQEGVAQEASALAGHLHLDNLIIFYDSNDVTLDAMAIESQSEDTAKRYEAYGFEVVTVKEGHNIERILEAYEHAKNSTSGKPQLIILKTTIAKGITEVAGTNKGHGEAGVKFVAAARKGLGLPEEKFFVSKGTRDYFQAHKEKLQKEYASWEKLYSEWRSANPELAALLDSAKVTPDASKLFSVIPKFADAPIATRKAGSDVLQPLAKALPLFISGSADLHGSTLNYIAGAGDYTPKNTGGRNIKFGIREHAMGAMLNGFAYHGIFRPSGATFLVFSDYLRPSIRLAALSHLPVIYIFTHDSVAVGEDGPTHQPVETVSSLRLIPNLDVIRPGDHEETAGAFVAALSRTTGPTLLALCRQNLPNLSQFDVNARREGVLKGGYILQKETGALKVIVISTGSELNVAVEAAKRLGDGVRVVSMPSTYRFDQQPAEYKEEVLPSSCKKRVVIEAGVTPLWHKYVGLEGKIIGIDRFGTSAPGATVLKTLGITADAVVAAANSF.

Position 30 (histidine 30) interacts with substrate. Residues histidine 70 and glycine 118–leucine 120 each bind thiamine diphosphate. The interval serine 99 to glycine 118 is disordered. Mg(2+) is bound at residue aspartate 159. Residues glycine 160 and asparagine 189 each contribute to the thiamine diphosphate site. Positions 189 and 191 each coordinate Mg(2+). Residues histidine 266, arginine 357, and serine 384 each coordinate substrate. Residue histidine 266 coordinates thiamine diphosphate. Glutamate 411 acts as the Proton donor in catalysis. Residue phenylalanine 437 coordinates thiamine diphosphate. Residues histidine 461, aspartate 469, and arginine 520 each contribute to the substrate site.

Belongs to the transketolase family. In terms of assembly, homodimer. Mg(2+) serves as cofactor. Requires Ca(2+) as cofactor. Mn(2+) is required as a cofactor. The cofactor is Co(2+). It depends on thiamine diphosphate as a cofactor.

It catalyses the reaction D-sedoheptulose 7-phosphate + D-glyceraldehyde 3-phosphate = aldehydo-D-ribose 5-phosphate + D-xylulose 5-phosphate. In terms of biological role, catalyzes the transfer of a two-carbon ketol group from a ketose donor to an aldose acceptor, via a covalent intermediate with the cofactor thiamine pyrophosphate. This Physarum polycephalum (Slime mold) protein is Transketolase (tkt).